The chain runs to 280 residues: Bifunctional protein FolD (280 aa).

Residues 166–168 (GRS) and Ser-191 each bind NADP(+).

The protein belongs to the tetrahydrofolate dehydrogenase/cyclohydrolase family. In terms of assembly, homodimer.

It catalyses the reaction (6R)-5,10-methylene-5,6,7,8-tetrahydrofolate + NADP(+) = (6R)-5,10-methenyltetrahydrofolate + NADPH. It carries out the reaction (6R)-5,10-methenyltetrahydrofolate + H2O = (6R)-10-formyltetrahydrofolate + H(+). Its pathway is one-carbon metabolism; tetrahydrofolate interconversion. Its function is as follows. Catalyzes the oxidation of 5,10-methylenetetrahydrofolate to 5,10-methenyltetrahydrofolate and then the hydrolysis of 5,10-methenyltetrahydrofolate to 10-formyltetrahydrofolate. The chain is Bifunctional protein FolD from Saccharophagus degradans (strain 2-40 / ATCC 43961 / DSM 17024).